A 311-amino-acid chain; its full sequence is tRNA-cytidine(32) 2-sulfurtransferase (311 aa).

Positions serine 47–serine 52 match the PP-loop motif motif. [4Fe-4S] cluster contacts are provided by cysteine 122, cysteine 125, and cysteine 213.

The protein belongs to the TtcA family. Homodimer. Mg(2+) serves as cofactor. It depends on [4Fe-4S] cluster as a cofactor.

Its subcellular location is the cytoplasm. The enzyme catalyses cytidine(32) in tRNA + S-sulfanyl-L-cysteinyl-[cysteine desulfurase] + AH2 + ATP = 2-thiocytidine(32) in tRNA + L-cysteinyl-[cysteine desulfurase] + A + AMP + diphosphate + H(+). It participates in tRNA modification. Catalyzes the ATP-dependent 2-thiolation of cytidine in position 32 of tRNA, to form 2-thiocytidine (s(2)C32). The sulfur atoms are provided by the cysteine/cysteine desulfurase (IscS) system. The protein is tRNA-cytidine(32) 2-sulfurtransferase of Salmonella choleraesuis (strain SC-B67).